A 465-amino-acid chain; its full sequence is 3-isopropylmalate dehydratase large subunit (465 aa).

[4Fe-4S] cluster contacts are provided by Cys-346, Cys-406, and Cys-409.

The protein belongs to the aconitase/IPM isomerase family. LeuC type 1 subfamily. In terms of assembly, heterodimer of LeuC and LeuD. The cofactor is [4Fe-4S] cluster.

It catalyses the reaction (2R,3S)-3-isopropylmalate = (2S)-2-isopropylmalate. It functions in the pathway amino-acid biosynthesis; L-leucine biosynthesis; L-leucine from 3-methyl-2-oxobutanoate: step 2/4. Functionally, catalyzes the isomerization between 2-isopropylmalate and 3-isopropylmalate, via the formation of 2-isopropylmaleate. The chain is 3-isopropylmalate dehydratase large subunit from Leptospira interrogans serogroup Icterohaemorrhagiae serovar copenhageni (strain Fiocruz L1-130).